The following is a 227-amino-acid chain: Phosphoribosylformylglycinamidine synthase subunit PurQ (227 aa).

Positions 3 to 225 (FAVIVFPGSN…LKQWRETYVV (223 aa)) constitute a Glutamine amidotransferase type-1 domain. Cys-86 acts as the Nucleophile in catalysis. Residues His-194 and Glu-196 contribute to the active site.

Part of the FGAM synthase complex composed of 1 PurL, 1 PurQ and 2 PurS subunits.

It is found in the cytoplasm. It catalyses the reaction N(2)-formyl-N(1)-(5-phospho-beta-D-ribosyl)glycinamide + L-glutamine + ATP + H2O = 2-formamido-N(1)-(5-O-phospho-beta-D-ribosyl)acetamidine + L-glutamate + ADP + phosphate + H(+). The catalysed reaction is L-glutamine + H2O = L-glutamate + NH4(+). The protein operates within purine metabolism; IMP biosynthesis via de novo pathway; 5-amino-1-(5-phospho-D-ribosyl)imidazole from N(2)-formyl-N(1)-(5-phospho-D-ribosyl)glycinamide: step 1/2. In terms of biological role, part of the phosphoribosylformylglycinamidine synthase complex involved in the purines biosynthetic pathway. Catalyzes the ATP-dependent conversion of formylglycinamide ribonucleotide (FGAR) and glutamine to yield formylglycinamidine ribonucleotide (FGAM) and glutamate. The FGAM synthase complex is composed of three subunits. PurQ produces an ammonia molecule by converting glutamine to glutamate. PurL transfers the ammonia molecule to FGAR to form FGAM in an ATP-dependent manner. PurS interacts with PurQ and PurL and is thought to assist in the transfer of the ammonia molecule from PurQ to PurL. This is Phosphoribosylformylglycinamidine synthase subunit PurQ from Bacillus anthracis (strain A0248).